Consider the following 956-residue polypeptide: Calsyntenin-3 (956 aa).

The first 19 residues, 1 to 19, serve as a signal peptide directing secretion; sequence MTLLLLPLLLASLLASCSC. The Cytoplasmic portion of the chain corresponds to 1–30; it reads MTLLLLPLLLASLLASCSCNKANKHKPWIE. The Extracellular portion of the chain corresponds to 20–847; it reads NKANKHKPWI…SHRNSMIPSA (828 aa). 2 consecutive Cadherin domains span residues 29–145 and 146–246; these read IEAE…APVF and VERL…KPSW. The segment at residues 31 to 51 is an intramembrane region (helical); that stretch reads AEYQGIVMENDNTVLLNPPLF. Over 52–71 the chain is Cytoplasmic; the sequence is ALDKDAPLRYAGEICGFRLH. Positions 72–94 form an intramembrane region, helical; the sequence is GSGVPFEAVILDKATGEGLIRAK. The Cytoplasmic portion of the chain corresponds to 95–151; that stretch reads EPVDCEAQKEHTFTIQAYDCGEGPDGANTKKSHKATVHVRVNDVNEFAPVFVERLYR. Residues 152 to 172 constitute an intramembrane region (helical); the sequence is AAVTEGKLYDRILRVEAIDGD. Topologically, residues 173-255 are cytoplasmic; it reads CSPQYSQICY…WQGWNKRIEY (83 aa). Residues 256 to 276 traverse the membrane as a helical segment; it reads APGAGSLALFPGIRLETCDEP. Over 277-364 the chain is Lumenal; it reads LWNIQATIEL…PLGGPSGLGS (88 aa). N-linked (GlcNAc...) asparagine glycosylation is found at asparagine 299, asparagine 327, asparagine 347, asparagine 507, and asparagine 740. The helical transmembrane segment at 848-868 threads the bilayer; the sequence is ATLIIVVCVGFLVLMVVLGLV. At 869-956 the chain is on the cytoplasmic side; it reads RIHSLHRRVS…RIIETPPHRY (88 aa). The interval 916-956 is disordered; that stretch reads QSCVTGAVGGQQEDEDSSDSEVADSPSSDERRIIETPPHRY. A compositionally biased stretch (acidic residues) spans 927-937; sequence QEDEDSSDSEV. The segment covering 943 to 956 has biased composition (basic and acidic residues); sequence SDERRIIETPPHRY.

This sequence belongs to the calsyntenin family. In terms of assembly, interacts (via cadherin domains) with both alpha and beta isoforms of neurexins (NRXN1, NRXN2 and NRXN3). Directly interacts with APBA2. Forms a tripartite complex with APBA2 and APP. Interacts with low affinity with KLC1. Interacts with SLC23A2/SVCT2. As to quaternary structure, interacts with CIDEA; inhibiting the lipid transferase activity of CIDEA. Interacts with CIDEC; inhibiting the lipid transferase activity of CIDEC. Proteolytically processed under normal cellular conditions. A primary zeta-cleavage generates a large extracellular (soluble) N-terminal domain (sAlc) and a short C-terminal transmembrane fragment (CTF1). A secondary cleavage catalyzed by gamma-secretase within the transmembrane domain releases the beta-Alc-beta chain in the extracellular milieu and produces an intracellular fragment (AlcICD). This processing is strongly suppressed in the tripartite complex formed with APBA2 and APP, which seems to prevent the association with gamma-secretase. In terms of processing, ubiquitinated: endoplasmic reticulum-localized protein is ubiquitinated and degraded by the endoplasmic reticulum-associated degradation (ERAD) pathway. In terms of tissue distribution, according to PubMed:12498782, expressed predominantly in the brain and in kidney. Low levels in heart, skeletal muscle, liver, placenta, pancreas and lung. According to PubMed:12972431, predominant expression in brain, and only marginal in kidney. In brain, present throughout all cortical layers, highest levels in GABAergic neurons (based on morphology and distribution pattern). Expression is restricted to adipose tissue, with high expression in multilocular thermogenic adipocytes (brown adipose tissue).

The protein localises to the postsynaptic cell membrane. The protein resides in the endoplasmic reticulum membrane. Its subcellular location is the golgi apparatus membrane. It is found in the cell projection. It localises to the dendrite. The protein localises to the lipid droplet. Its function is as follows. Postsynaptic adhesion molecule that binds to presynaptic neurexins to mediate both excitatory and inhibitory synapse formation. Promotes synapse development by acting as a cell adhesion molecule at the postsynaptic membrane, which associates with both neurexin-alpha and neurexin-beta proteins at the presynaptic membrane. Regulates the balance between excitatory and inhibitory synapses by inhibiting formation of excitatory parallel-fiber synapses and promoting formation of inhibitory synapses in the same neuron. May also be involved in ascorbate (vitamin C) uptake via its interaction with SLC23A2/SVCT2. Complex formation with APBA2 and APP, stabilizes APP metabolism and enhances APBA2-mediated suppression of beta-APP40 secretion, due to the retardation of intracellular APP maturation. In terms of biological role, adipose-specific isoform that plays a key role in adaptive thermogenesis. Facilitates the efficient use of stored triglyceride by promoting multilocular morphology of thermogenic adipocytes: acts by inhibiting the activity of CIDEA and CIDEC on lipid droplets, thereby preventing lipid droplet fusion and facilitating lipid utilization. May also participate in adaptive thermogenesis by promoting sympathetic innervation of thermogenic adipose tissue: acts by driving secretion of neurotrophic factor S100B from brown adipocytes, stimulating neurite outgrowth from sympathetic neurons. The sequence is that of Calsyntenin-3 from Homo sapiens (Human).